The primary structure comprises 179 residues: Large ribosomal subunit protein uL5 (179 aa).

Belongs to the universal ribosomal protein uL5 family. In terms of assembly, part of the 50S ribosomal subunit; part of the 5S rRNA/L5/L18/L25 subcomplex. Contacts the 5S rRNA and the P site tRNA. Forms a bridge to the 30S subunit in the 70S ribosome.

In terms of biological role, this is one of the proteins that bind and probably mediate the attachment of the 5S RNA into the large ribosomal subunit, where it forms part of the central protuberance. In the 70S ribosome it contacts protein S13 of the 30S subunit (bridge B1b), connecting the 2 subunits; this bridge is implicated in subunit movement. Contacts the P site tRNA; the 5S rRNA and some of its associated proteins might help stabilize positioning of ribosome-bound tRNAs. The chain is Large ribosomal subunit protein uL5 from Salmonella agona (strain SL483).